The following is a 344-amino-acid chain: Phosphoribosylformylglycinamidine cyclo-ligase (344 aa).

Belongs to the AIR synthase family.

It localises to the cytoplasm. The enzyme catalyses 2-formamido-N(1)-(5-O-phospho-beta-D-ribosyl)acetamidine + ATP = 5-amino-1-(5-phospho-beta-D-ribosyl)imidazole + ADP + phosphate + H(+). It functions in the pathway purine metabolism; IMP biosynthesis via de novo pathway; 5-amino-1-(5-phospho-D-ribosyl)imidazole from N(2)-formyl-N(1)-(5-phospho-D-ribosyl)glycinamide: step 2/2. The chain is Phosphoribosylformylglycinamidine cyclo-ligase from Haemophilus influenzae (strain PittEE).